A 581-amino-acid polypeptide reads, in one-letter code: MRARQFFISTLKEAPADAEVVSQKLMLRAGMIRKVAAGIYNYLPMGLKSIRKVENIIREEMNRAGALELTMPLVQPSELWQETGRWDKMGPEMLRFKDRHERDFALQPTSEEVVTDIARQELKSYRQLPKNFYQIQTKFRDERRPRFGVMRGREFTMKDAYSFDRSAEAAGESYDAMYAAYSRIFDRLGLTYRAVAADTGAIGGDRSHEFQVIADTGEDAIVYCPDSSYAANIELAEALSLLPARAGASAPLAKTPTPGKSTCEDVAALLGVPLASTVKSLVLATDDEDESGKVVKSTVWLLLVRGDHELNEVKAGKIEGLKAGFRFATEAEILDHFGCKPGYLGPIGLAQPVKVIADRTVANMADFVCGANAEDFHYTGANWGRDLPEPDLVADIRNVVEGDPSPDGKGKLAIQRGIEVGHVFYLGTKYSKAMNATFLDVDGKPKHFEMGCYGIGVTRILGAAIEQNHDERGIIWPASIAPFEVVICPVGWSKSEAVRDEAQKLYDALVAAGVDVILDDRDERPGVMFADWELIGVPHRVTIGDRGLKEGVAEYQGRRDPEASRVAVAEIAPHLISRLRP.

Belongs to the class-II aminoacyl-tRNA synthetase family. ProS type 1 subfamily. In terms of assembly, homodimer.

It localises to the cytoplasm. It carries out the reaction tRNA(Pro) + L-proline + ATP = L-prolyl-tRNA(Pro) + AMP + diphosphate. In terms of biological role, catalyzes the attachment of proline to tRNA(Pro) in a two-step reaction: proline is first activated by ATP to form Pro-AMP and then transferred to the acceptor end of tRNA(Pro). As ProRS can inadvertently accommodate and process non-cognate amino acids such as alanine and cysteine, to avoid such errors it has two additional distinct editing activities against alanine. One activity is designated as 'pretransfer' editing and involves the tRNA(Pro)-independent hydrolysis of activated Ala-AMP. The other activity is designated 'posttransfer' editing and involves deacylation of mischarged Ala-tRNA(Pro). The misacylated Cys-tRNA(Pro) is not edited by ProRS. This Azoarcus sp. (strain BH72) protein is Proline--tRNA ligase.